A 606-amino-acid polypeptide reads, in one-letter code: Flagellar WD repeat-containing protein Pf20 (606 aa).

A disordered region spans residues proline 229–serine 250. WD repeat units lie at residues glycine 324 to histidine 354, glycine 366 to aspartate 396, aspartate 408 to aspartate 438, glycine 450 to aspartate 480, glycine 492 to aspartate 522, threonine 534 to serine 564, and glycine 576 to serine 606.

Inter-microtubule bridges in flagella.

Its subcellular location is the cell projection. The protein localises to the cilium. The protein resides in the flagellum. The sequence is that of Flagellar WD repeat-containing protein Pf20 (PF20) from Chlamydomonas reinhardtii (Chlamydomonas smithii).